The sequence spans 328 residues: Ubiquitin-conjugating enzyme E2 Z (328 aa).

The region spanning 71 to 225 (QCILRIKRDI…IRHETMRVAV (155 aa)) is the UBC core domain. Residue C160 is the Glycyl thioester intermediate of the active site. A disordered region spans residues 295 to 328 (RLREKCPPEDNDGDSDSDTSSSGTDPDSQGSSQP). The segment covering 312 to 328 (DTSSSGTDPDSQGSSQP) has biased composition (low complexity).

It belongs to the ubiquitin-conjugating enzyme family.

It is found in the cytoplasm. It localises to the nucleus. The catalysed reaction is S-ubiquitinyl-[E1 ubiquitin-activating enzyme]-L-cysteine + [E2 ubiquitin-conjugating enzyme]-L-cysteine = [E1 ubiquitin-activating enzyme]-L-cysteine + S-ubiquitinyl-[E2 ubiquitin-conjugating enzyme]-L-cysteine.. It functions in the pathway protein modification; protein ubiquitination. Its function is as follows. Catalyzes the covalent attachment of ubiquitin to other proteins. May be involved in apoptosis regulation. This chain is Ubiquitin-conjugating enzyme E2 Z (ube2z), found in Danio rerio (Zebrafish).